A 412-amino-acid chain; its full sequence is Vacuolar calcium ion transporter (412 aa).

Topologically, residues 1-55 (MIERLKIAKNRLEAMNSFNFPAQDRHERAPLLGSEYDHSMARQLSLLNVVGMTKS) are cytoplasmic. Residues 56–76 (VLMSSYFNLMLVFVPIGLIAG) traverse the membrane as a helical segment. Residues 77–83 (WFEWNAK) lie on the Lumenal side of the membrane. A helical transmembrane segment spans residues 84 to 104 (SVFILNMLAIIPLASLLSFAT). The Cytoplasmic segment spans residues 105-114 (EQLSIISGPT). A helical transmembrane segment spans residues 115-135 (LGALLNASFGNAIELIVGVLA). Topologically, residues 136 to 148 (LKRGELRIVQSSL) are lumenal. The chain crosses the membrane as a helical span at residues 149–169 (LGSILSNLLLVFGMCLVTTGI). Topologically, residues 170 to 177 (RREITTFN) are cytoplasmic. Residues 178 to 198 (ITVAQTMIAMLALSTATILIP) traverse the membrane as a helical segment. Residues 199–215 (ATFHYSLPDNANSENAL) lie on the Lumenal side of the membrane. A helical membrane pass occupies residues 216–236 (LHVSRGTAVIVLIVYVLLLVF). The Cytoplasmic portion of the chain corresponds to 237-264 (QLKTHKHVCHDPSEVEEETEPRILGLRS). Residues 265 to 285 (SIAMLAIVTVFVSLCADYLVG) form a helical membrane-spanning segment. The Lumenal portion of the chain corresponds to 286-299 (SIDQLVEEVNISKT). Residues 300–320 (FVGLVILPVVGNAAEHVTAIV) traverse the membrane as a helical segment. Residues 321-334 (VSYRGQMDLALGVA) lie on the Cytoplasmic side of the membrane. The helical transmembrane segment at 335-355 (IGSSIQIALFLAPFLVIVGWI) threads the bilayer. The Lumenal segment spans residues 356-358 (ISQ). The helical transmembrane segment at 359 to 379 (PLTLYFESLETVILFVSVFLV) threads the bilayer. The Cytoplasmic segment spans residues 380 to 389 (NYLIQDGATH). The helical transmembrane segment at 390-410 (WLEGVQLLALYAIVVLAFFYY) threads the bilayer. Residues 411-412 (PQ) lie on the Lumenal side of the membrane.

It belongs to the Ca(2+):cation antiporter (CaCA) (TC 2.A.19) family.

Its subcellular location is the vacuole membrane. The protein resides in the endoplasmic reticulum membrane. Has a role in promoting intracellular calcium ion sequestration via the exchange of calcium ions for hydrogen ions across the vacuolar membrane. Involved also in manganese ion homeostasis via its uptake into the vacuole. The sequence is that of Vacuolar calcium ion transporter (vcx1) from Schizosaccharomyces pombe (strain 972 / ATCC 24843) (Fission yeast).